Reading from the N-terminus, the 310-residue chain is Dehydrodolichyl diphosphate synthase 2 (310 aa).

The protein belongs to the UPP synthase family. The cofactor is Mg(2+).

It functions in the pathway protein modification; protein glycosylation. Its function is as follows. Catalyzes cis-prenyl chain elongation to produce the polyprenyl backbone of dolichol, a glycosyl carrier-lipid required for the biosynthesis of several classes of glycoprotein. The protein is Dehydrodolichyl diphosphate synthase 2 of Arabidopsis thaliana (Mouse-ear cress).